A 1173-amino-acid chain; its full sequence is 3-hydroxy-3-methylglutaryl coenzyme A reductase mlcD (1173 aa).

2 N-linked (GlcNAc...) asparagine glycosylation sites follow: Asn-143 and Asn-186. An SSD domain is found at 241–420 (DVVVMVLGYI…FTFYTAILSI (180 aa)). A run of 7 helical transmembrane segments spans residues 242-262 (VVVM…LFLS), 272-292 (LATS…DVAI), 302-322 (LLSE…SITL), 368-388 (NIVC…VLGI), 397-417 (VLAA…YTAI), 479-499 (FWMV…TLFQ), and 594-614 (VLSK…SYLF). Positions 498-673 (FQASSSGSLS…FTPTTTDSDS (176 aa)) are linker. Polar residues predominate over residues 647–666 (NQTPQIQSSLQAPQTRVFTP). The segment at 647–669 (NQTPQIQSSLQAPQTRVFTPTTT) is disordered. The interval 674-1133 (DASLVLIKAS…LVKAHMAHNR (460 aa)) is catalytic. Residue Glu-822 is the Charge relay system of the active site. Asn-886 is a glycosylation site (N-linked (GlcNAc...) asparagine). The Charge relay system role is filled by Lys-956. An N-linked (GlcNAc...) asparagine glycan is attached at Asn-997. The Charge relay system role is filled by Asp-1032. Catalysis depends on His-1128, which acts as the Proton donor. A glycan (N-linked (GlcNAc...) asparagine) is linked at Asn-1132. Positions 1132-1173 (NRSAPASSAPSRSVSPSGGTRTVPVPNNALRPSAAATDRARR) are disordered. The segment covering 1133 to 1148 (RSAPASSAPSRSVSPS) has biased composition (low complexity).

Belongs to the HMG-CoA reductase family.

The protein resides in the endoplasmic reticulum membrane. The enzyme catalyses (R)-mevalonate + 2 NADP(+) + CoA = (3S)-3-hydroxy-3-methylglutaryl-CoA + 2 NADPH + 2 H(+). The protein operates within polyketide biosynthesis. HMG-CoA reductase; part of the gene cluster that mediates the biosynthesis of compactin, also known as mevastatin or ML-236B, and which acts as a potent competitive inhibitor of HMG-CoA reductase. Compactin biosynthesis is performed in two stages. The first stage is catalyzed by the nonaketide synthase mlcA, which belongs to type I polyketide synthases and catalyzes the iterative nine-step formation of the polyketide. This PKS stage is completed by the action of dehydrogenase mlcG, which catalyzes the NADPH-dependent reduction of the unsaturated tetra-, penta- and heptaketide intermediates that arise during the mlcA-mediated biosynthesis of the nonaketide chain and leads to dihydro-ML-236C carboxylate. Covalently bound dihydro-ML-236C carboxylate is released from mlcA by the mlcF esterase. Conversion of dihydro-ML-236C carboxylate into ML-236A carboxylate is subsequently performed with the participation of molecular oxygen and P450 monoogygenase mlcC. Finally, mlcH performs the conversion of ML-236A carboxylate to ML-236B/compactin carboxylate through the addition of the side-chain diketide moiety produced by the diketide synthase mlcB. HMG-CoA reductase mlcD may act as a down-regulator of compactin production and is involved in conferring resistance to ML-236B/compactin. The polypeptide is 3-hydroxy-3-methylglutaryl coenzyme A reductase mlcD (Penicillium citrinum).